A 458-amino-acid polypeptide reads, in one-letter code: UDP-N-acetylmuramate--L-alanine ligase (458 aa).

112 to 118 (GTHGKTT) provides a ligand contact to ATP.

It belongs to the MurCDEF family.

It localises to the cytoplasm. The enzyme catalyses UDP-N-acetyl-alpha-D-muramate + L-alanine + ATP = UDP-N-acetyl-alpha-D-muramoyl-L-alanine + ADP + phosphate + H(+). It functions in the pathway cell wall biogenesis; peptidoglycan biosynthesis. Its function is as follows. Cell wall formation. This is UDP-N-acetylmuramate--L-alanine ligase from Syntrophotalea carbinolica (strain DSM 2380 / NBRC 103641 / GraBd1) (Pelobacter carbinolicus).